Here is a 601-residue protein sequence, read N- to C-terminus: DNA ligase (601 aa).

Position 258 (D258) interacts with ATP. The N6-AMP-lysine intermediate role is filled by K260. ATP-binding residues include R265, R280, E310, F350, R427, and K433.

It belongs to the ATP-dependent DNA ligase family. As to quaternary structure, interacts with the PCNA heterotrimer, probably via subunit PCNA3. It depends on a divalent metal cation as a cofactor.

The catalysed reaction is ATP + (deoxyribonucleotide)n-3'-hydroxyl + 5'-phospho-(deoxyribonucleotide)m = (deoxyribonucleotide)n+m + AMP + diphosphate.. Ligase activity stimulated by PCNA heterotrimer. In terms of biological role, DNA ligase that seals nicks in double-stranded DNA during DNA replication, DNA recombination and DNA repair. Interaction with PCNA enhances ligase activity. DNA polymerase I, DNA ligase and the flap endonuclease may be constitutively associated with the PCNA heterotrimer forming a scanning complex able to couple DNA synthesis and Okazaki fragment maturation. The chain is DNA ligase from Saccharolobus solfataricus (strain ATCC 35092 / DSM 1617 / JCM 11322 / P2) (Sulfolobus solfataricus).